The sequence spans 446 residues: Exodeoxyribonuclease 7 large subunit (446 aa).

The protein belongs to the XseA family. Heterooligomer composed of large and small subunits.

Its subcellular location is the cytoplasm. The enzyme catalyses Exonucleolytic cleavage in either 5'- to 3'- or 3'- to 5'-direction to yield nucleoside 5'-phosphates.. Bidirectionally degrades single-stranded DNA into large acid-insoluble oligonucleotides, which are then degraded further into small acid-soluble oligonucleotides. The chain is Exodeoxyribonuclease 7 large subunit from Streptococcus pneumoniae (strain Hungary19A-6).